The following is a 189-amino-acid chain: Tetratricopeptide repeat protein 36 (189 aa).

3 TPR repeats span residues serine 51–arginine 84, serine 86–arginine 118, and arginine 123–phenylalanine 156.

Belongs to the TTC36 family.

This chain is Tetratricopeptide repeat protein 36 (TTC36), found in Homo sapiens (Human).